Reading from the N-terminus, the 441-residue chain is Signal recognition particle 54 kDa protein (441 aa).

GTP contacts are provided by residues 103 to 110 (GVQGSGKT), 184 to 188 (DTAGR), and 244 to 247 (TKMD).

The protein belongs to the GTP-binding SRP family. SRP54 subfamily. As to quaternary structure, part of the signal recognition particle protein translocation system, which is composed of SRP and FtsY. Archaeal SRP consists of a 7S RNA molecule of 300 nucleotides and two protein subunits: SRP54 and SRP19.

It is found in the cytoplasm. It catalyses the reaction GTP + H2O = GDP + phosphate + H(+). In terms of biological role, involved in targeting and insertion of nascent membrane proteins into the cytoplasmic membrane. Binds to the hydrophobic signal sequence of the ribosome-nascent chain (RNC) as it emerges from the ribosomes. The SRP-RNC complex is then targeted to the cytoplasmic membrane where it interacts with the SRP receptor FtsY. In Aeropyrum pernix (strain ATCC 700893 / DSM 11879 / JCM 9820 / NBRC 100138 / K1), this protein is Signal recognition particle 54 kDa protein.